We begin with the raw amino-acid sequence, 397 residues long: Digeranylgeranylglycerophospholipid reductase 1 (397 aa).

10 residues coordinate FAD: alanine 18, aspartate 37, cysteine 48, alanine 49, glycine 51, arginine 104, alanine 128, aspartate 284, glycine 296, and isoleucine 297.

It belongs to the geranylgeranyl reductase family. DGGGPL reductase subfamily. FAD is required as a cofactor.

It catalyses the reaction a 2,3-bis-O-phytanyl-sn-glycerol 1-phospholipid + 8 A = a 2,3-bis-O-(geranylgeranyl)-sn-glycerol 1-phospholipid + 8 AH2. It carries out the reaction 2,3-bis-O-(phytanyl)-sn-glycerol 1-phosphate + 8 A = 2,3-bis-O-(geranylgeranyl)-sn-glycerol 1-phosphate + 8 AH2. The catalysed reaction is CDP-2,3-bis-O-(geranylgeranyl)-sn-glycerol + 8 AH2 = CDP-2,3-bis-O-(phytanyl)-sn-glycerol + 8 A. The enzyme catalyses archaetidylserine + 8 AH2 = 2,3-bis-O-phytanyl-sn-glycero-3-phospho-L-serine + 8 A. It functions in the pathway membrane lipid metabolism; glycerophospholipid metabolism. Functionally, is involved in the reduction of 2,3-digeranylgeranylglycerophospholipids (unsaturated archaeols) into 2,3-diphytanylglycerophospholipids (saturated archaeols) in the biosynthesis of archaeal membrane lipids. Catalyzes the formation of archaetidic acid (2,3-di-O-phytanyl-sn-glyceryl phosphate) from 2,3-di-O-geranylgeranylglyceryl phosphate (DGGGP) via the hydrogenation of each double bond of the isoprenoid chains. Is also probably able to reduce double bonds of geranyl groups in CDP-2,3-bis-O-(geranylgeranyl)-sn-glycerol and archaetidylserine, thus acting at various stages in the biosynthesis of archaeal membrane lipids. The polypeptide is Digeranylgeranylglycerophospholipid reductase 1 (Methanothermobacter thermautotrophicus (strain ATCC 29096 / DSM 1053 / JCM 10044 / NBRC 100330 / Delta H) (Methanobacterium thermoautotrophicum)).